Here is a 489-residue protein sequence, read N- to C-terminus: Long chain base biosynthesis protein 2a (489 aa).

Residues 2-22 (ITIPYLTAVSTYFSYGLLFAF) traverse the membrane as a helical segment. K311 carries the post-translational modification N6-(pyridoxal phosphate)lysine.

This sequence belongs to the class-II pyridoxal-phosphate-dependent aminotransferase family. Heterodimer with LCB1. Component of the serine palmitoyltransferase (SPT) complex, composed of LCB1 and LCB2 (LCB2a or LCB2b). The cofactor is pyridoxal 5'-phosphate. In terms of tissue distribution, ubiquitous. Detected in leaves, roots, stems, flowers and at a lower level in mature seeds.

It is found in the endoplasmic reticulum membrane. It carries out the reaction L-serine + hexadecanoyl-CoA + H(+) = 3-oxosphinganine + CO2 + CoA. Its pathway is lipid metabolism; sphingolipid metabolism. Serine palmitoyltransferase (SPT). The heterodimer formed with LCB1 constitutes the catalytic core. Involved in the regulation of the programmed cell death (PCD) signaling pathway. Plays an important role during male gametogenesis and embryogenesis. This chain is Long chain base biosynthesis protein 2a (LCB2a), found in Arabidopsis thaliana (Mouse-ear cress).